A 142-amino-acid polypeptide reads, in one-letter code: Large ribosomal subunit protein uL11 (142 aa).

This sequence belongs to the universal ribosomal protein uL11 family. In terms of assembly, part of the ribosomal stalk of the 50S ribosomal subunit. Interacts with L10 and the large rRNA to form the base of the stalk. L10 forms an elongated spine to which L12 dimers bind in a sequential fashion forming a multimeric L10(L12)X complex. In terms of processing, one or more lysine residues are methylated.

Forms part of the ribosomal stalk which helps the ribosome interact with GTP-bound translation factors. In Acinetobacter baumannii (strain AB307-0294), this protein is Large ribosomal subunit protein uL11.